Reading from the N-terminus, the 426-residue chain is Multifunctional protein ADE2 (426 aa).

The interval M1–L261 is SAICAR synthetase. An AIR carboxylase region spans residues K262–L426.

In the N-terminal section; belongs to the SAICAR synthetase family. The protein in the C-terminal section; belongs to the AIR carboxylase family. Class II subfamily. As to quaternary structure, homooctamer.

The catalysed reaction is 5-amino-1-(5-phospho-D-ribosyl)imidazole-4-carboxylate + L-aspartate + ATP = (2S)-2-[5-amino-1-(5-phospho-beta-D-ribosyl)imidazole-4-carboxamido]succinate + ADP + phosphate + 2 H(+). It catalyses the reaction 5-amino-1-(5-phospho-D-ribosyl)imidazole-4-carboxylate + H(+) = 5-amino-1-(5-phospho-beta-D-ribosyl)imidazole + CO2. It participates in purine metabolism; IMP biosynthesis via de novo pathway; 5-amino-1-(5-phospho-D-ribosyl)imidazole-4-carboxamide from 5-amino-1-(5-phospho-D-ribosyl)imidazole-4-carboxylate: step 1/2. The protein operates within purine metabolism; IMP biosynthesis via de novo pathway; 5-amino-1-(5-phospho-D-ribosyl)imidazole-4-carboxylate from 5-amino-1-(5-phospho-D-ribosyl)imidazole (carboxylase route): step 1/1. This Gallus gallus (Chicken) protein is Multifunctional protein ADE2 (AIRC).